Consider the following 531-residue polypeptide: Na(+)/H(+) antiporter NhaB (531 aa).

Transmembrane regions (helical) follow at residues 13-33 (FLGK…IINP), 34-54 (LVFF…EFIF), 90-110 (LVAN…IYFM), 121-141 (ILIG…TAAF), 145-165 (FLDA…FYAI), 206-226 (LLMH…VGEP), 242-262 (FIIR…LTCV), 308-328 (VIAV…GLIG), 352-372 (EEAL…AVII), 394-414 (LALF…VFVG), 456-476 (GQAA…QLSY), and 482-502 (MALP…SFLL).

This sequence belongs to the NhaB Na(+)/H(+) (TC 2.A.34) antiporter family.

It is found in the cell inner membrane. The enzyme catalyses 2 Na(+)(in) + 3 H(+)(out) = 2 Na(+)(out) + 3 H(+)(in). Functionally, na(+)/H(+) antiporter that extrudes sodium in exchange for external protons. The sequence is that of Na(+)/H(+) antiporter NhaB from Aliivibrio salmonicida (strain LFI1238) (Vibrio salmonicida (strain LFI1238)).